The following is a 1200-amino-acid chain: PAN2-PAN3 deadenylation complex catalytic subunit Pan2 (1200 aa).

WD repeat units follow at residues 153-193 (DENE…QKYA), 195-231 (ETPGVTIMRQTNRFFFCGHTSGKVSLRDLRSFKVEHE), 244-280 (VHGNLLAACGFSSRLTGLACDRFLKVYDLRMMRAITP), and 328-367 (PVGPLLMTFDVSASKQALAFGDSEGCVHLWTDSPEPSFNP). Residues 368–484 (YSRETEFALP…PTGREEEPLH (117 aa)) form a linker region. Residues 485–923 (TVSKKYRKVT…VPAILYYVKR (439 aa)) enclose the USP domain. Phosphoserine is present on Ser784. In terms of domain architecture, Exonuclease spans 974-1146 (VGLDAEFVTL…EDARTALQLY (173 aa)). The a divalent metal cation site is built by Asp977, Glu979, Asp1086, and Asp1138. A Phosphoserine modification is found at Ser1188.

The protein belongs to the peptidase C19 family. PAN2 subfamily. Forms a heterotrimer with an asymmetric homodimer of the regulatory subunit PAN3 to form the poly(A)-nuclease (PAN) deadenylation complex. Interacts with PAN3 isoform 1/Pan3L and isoform 3/Pan3S. Interacts with ZFP36. It depends on a divalent metal cation as a cofactor.

The protein localises to the cytoplasm. It is found in the P-body. The protein resides in the nucleus. The enzyme catalyses Exonucleolytic cleavage of poly(A) to 5'-AMP.. With respect to regulation, positively regulated by the regulatory subunit PAN3. In terms of biological role, catalytic subunit of the poly(A)-nuclease (PAN) deadenylation complex, one of two cytoplasmic mRNA deadenylases involved in general and miRNA-mediated mRNA turnover. PAN specifically shortens poly(A) tails of RNA and the activity is stimulated by poly(A)-binding protein (PABP). PAN deadenylation is followed by rapid degradation of the shortened mRNA tails by the CCR4-NOT complex. Deadenylated mRNAs are then degraded by two alternative mechanisms, namely exosome-mediated 3'-5' exonucleolytic degradation, or deadenylation-dependent mRNA decaping and subsequent 5'-3' exonucleolytic degradation by XRN1. Also acts as an important regulator of the HIF1A-mediated hypoxic response. Required for HIF1A mRNA stability independent of poly(A) tail length regulation. The chain is PAN2-PAN3 deadenylation complex catalytic subunit Pan2 from Mus musculus (Mouse).